A 382-amino-acid polypeptide reads, in one-letter code: MATATVLEKANIGVYTNTNHDLWVAESKPTLEEVKSGESLKPGEVTVQVRSTGICGSDVHFWHAGCIGPMIVTGDHILGHESAGEVIAVASDVTHLKPGDRVAVEPNIPCHACEPCLTGRYNGCEKVLFLSTPPVDGLLRRYVNHPAVWCHKIGDMSYEDGALLEPLSVSLAAIERSGLRLGDPVLVTGAGPIGLITLLSARAAGATPIVITDIDEGRLAFAKSLVPDVITYKVQTNLSAEDNAAGIIDAFNDGQGSAPDALKPKLALECTGVESSVASAIWSVKFGGKVFVIGVGKNEMKIPFMRLSTQEIDLQYQYRYCNTWPRAIRLVRNGVISLKKLVTHRFLLEDALKAFETAADPKTGAIKVQIMSNEEDVKGASA.

Cys55, His80, Glu81, Cys110, Cys113, Cys116, Cys124, and Glu165 together coordinate Zn(2+). NAD(+) is bound by residues 192–193 (PI), Asp213, Arg218, Ile293, and 317–319 (QYR).

This sequence belongs to the zinc-containing alcohol dehydrogenase family. As to quaternary structure, homotetramer. Zn(2+) serves as cofactor.

It carries out the reaction L-arabinitol + NAD(+) = L-xylulose + NADH + H(+). It participates in carbohydrate degradation; L-arabinose degradation via L-arabinitol; D-xylulose 5-phosphate from L-arabinose (fungal route): step 2/5. Its function is as follows. Catalyzes the NAD-dependent oxidation of L-arabinitol to L-xylulose in the fungal L-arabinose catabolic pathway. L-arabinose catabolism is important for using plant material as a carbon source. Also active on ribitol and xylitol. Not active with NADP as cosubstrate. In Aspergillus oryzae (Yellow koji mold), this protein is L-arabinitol 4-dehydrogenase (ladA).